Reading from the N-terminus, the 354-residue chain is Trans-L-3-hydroxyproline dehydratase (354 aa).

C104 acts as the Proton acceptor in catalysis. Substrate is bound by residues 105 to 106, D269, and 274 to 275; these read GH and GS.

The protein belongs to the proline racemase family. In terms of assembly, homodimer.

The enzyme catalyses trans-3-hydroxy-L-proline = 1-pyrroline-2-carboxylate + H2O. Its function is as follows. Catalyzes the dehydration of trans-3-hydroxy-L-proline to Delta(1)-pyrroline-2-carboxylate (Pyr2C). The chain is Trans-L-3-hydroxyproline dehydratase (L3HYPDH) from Bos taurus (Bovine).